Consider the following 278-residue polypeptide: Biotin synthase (278 aa).

One can recognise a Radical SAM core domain in the interval 1–227 (MQIMLCAISN…QSVVMVAGGR (227 aa)). [4Fe-4S] cluster contacts are provided by C16, C20, and C23. [2Fe-2S] cluster is bound by residues C60, C95, and C153.

This sequence belongs to the radical SAM superfamily. Biotin synthase family. As to quaternary structure, homodimer. [4Fe-4S] cluster serves as cofactor. Requires [2Fe-2S] cluster as cofactor.

It catalyses the reaction (4R,5S)-dethiobiotin + (sulfur carrier)-SH + 2 reduced [2Fe-2S]-[ferredoxin] + 2 S-adenosyl-L-methionine = (sulfur carrier)-H + biotin + 2 5'-deoxyadenosine + 2 L-methionine + 2 oxidized [2Fe-2S]-[ferredoxin]. It participates in cofactor biosynthesis; biotin biosynthesis; biotin from 7,8-diaminononanoate: step 2/2. Catalyzes the conversion of dethiobiotin (DTB) to biotin by the insertion of a sulfur atom into dethiobiotin via a radical-based mechanism. In Campylobacter jejuni (strain RM1221), this protein is Biotin synthase.